Here is a 165-residue protein sequence, read N- to C-terminus: 3-isopropylmalate dehydratase small subunit (165 aa).

It belongs to the LeuD family. LeuD type 2 subfamily. As to quaternary structure, heterodimer of LeuC and LeuD.

It catalyses the reaction (2R,3S)-3-isopropylmalate = (2S)-2-isopropylmalate. The protein operates within amino-acid biosynthesis; L-leucine biosynthesis; L-leucine from 3-methyl-2-oxobutanoate: step 2/4. Functionally, catalyzes the isomerization between 2-isopropylmalate and 3-isopropylmalate, via the formation of 2-isopropylmaleate. The protein is 3-isopropylmalate dehydratase small subunit of Desulfovibrio desulfuricans (strain ATCC 27774 / DSM 6949 / MB).